We begin with the raw amino-acid sequence, 2138 residues long: Non-reducing polyketide synthase rads2 (2138 aa).

The interval leucine 11–histidine 249 is N-terminal acylcarrier protein transacylase (SAT) domain. A Ketosynthase family 3 (KS3) domain is found at serine 373–aspartate 804. Catalysis depends on for beta-ketoacyl synthase activity residues cysteine 549, histidine 684, and histidine 724. The malonyl-CoA:ACP transacylase (MAT) domain stretch occupies residues valine 901–alanine 1184. The active-site For acyl/malonyl transferase activity is the serine 992. Positions alanine 1291–tryptophan 1437 are N-terminal hotdog fold. The PKS/mFAS DH domain occupies alanine 1291 to lysine 1610. A product template (PT) domain region spans residues lysine 1303–alanine 1607. The segment at histidine 1459–lysine 1610 is C-terminal hotdog fold. The interval serine 1618 to valine 1666 is disordered. The region spanning valine 1666–proline 1740 is the Carrier domain. The residue at position 1700 (serine 1700) is an O-(pantetheine 4'-phosphoryl)serine. The span at proline 1740–serine 1771 shows a compositional bias: low complexity. 2 disordered regions span residues proline 1740–glutamate 1781 and glutamine 1807–alanine 1828. A thioesterase (TE) domain region spans residues alanine 1860–serine 2006.

The protein operates within secondary metabolite biosynthesis. Functionally, non-reducing polyketide synthase; part of the gene cluster that mediates the biosynthesis of radicicol, a resorcylic acid lactone (RAL) that irreversibly inhibits the HSP90 molecular chaperone, an important target for cancer chemotherapy. The cluster encodes only two apparent post-PKS enzymes, a cytochrome P450 monooxygenase (radP) and a non-heme halogenase (radH) that introduce the epoxide and the chlorine, respectively. If this cluster includes all the genes required for radicicol biosynthesis, the remaining structural features of radicicol are presumably generated by the PKSs rads1 and rads2. The C-2' ketone could arise if the R-PKS rads1 and NR-PKS rads2 each carry out four iterations, in contrast to the five iteration-three iteration split for the hypothemycin PKSs. The origin of the cis 5',6' double bond is not known. The radicicol R-PKS rads1 ER domain may catalyze either double bond isomerization or reduction in the third iteration. The protein is Non-reducing polyketide synthase rads2 of Floropilus chiversii (Chaetomium chiversii).